Consider the following 121-residue polypeptide: MKKQSGMTLIEVMVALVVFALAGLAVMQATLQQTRQLGRMEEKTLASWLADNQLVQLRLENRWPALSWSETTLQAAGVSWHIRWQGVETDLPQLRALDVEVRHAKSDKTPVSSLRTYVTSP.

Positions 1–6 are cleaved as a propeptide — leader sequence; the sequence is MKKQSG. Met7 bears the N-methylmethionine mark. The helical transmembrane segment at 7–27 threads the bilayer; it reads MTLIEVMVALVVFALAGLAVM.

It belongs to the GSP I family. As to quaternary structure, type II secretion is composed of four main components: the outer membrane complex, the inner membrane complex, the cytoplasmic secretion ATPase and the periplasm-spanning pseudopilus. Interacts with core component PulG. In terms of processing, cleaved by prepilin peptidase. Post-translationally, methylated by prepilin peptidase at the amino group of the N-terminal methionine once the leader sequence is cleaved by prepilin peptidase.

It localises to the cell inner membrane. Its function is as follows. Component of the type II secretion system required for the energy-dependent secretion of extracellular factors such as proteases and toxins from the periplasm. Part of the pseudopilus tip complex that is critical for the recognition and binding of secretion substrates. The sequence is that of Type II secretion system protein I (pulI) from Klebsiella pneumoniae.